The following is a 511-amino-acid chain: Phosphoenolpyruvate carboxylase (511 aa).

The protein belongs to the PEPCase type 2 family. Homotetramer. The cofactor is Mg(2+).

The enzyme catalyses oxaloacetate + phosphate = phosphoenolpyruvate + hydrogencarbonate. Its function is as follows. Catalyzes the irreversible beta-carboxylation of phosphoenolpyruvate (PEP) to form oxaloacetate (OAA), a four-carbon dicarboxylic acid source for the tricarboxylic acid cycle. The protein is Phosphoenolpyruvate carboxylase of Saccharolobus islandicus (strain Y.N.15.51 / Yellowstone #2) (Sulfolobus islandicus).